Here is a 165-residue protein sequence, read N- to C-terminus: LOB domain-containing protein 21 (165 aa).

The LOB domain occupies 10 to 111 (SSCAACKLLK…HDLAVARTRL (102 aa)).

The protein belongs to the LOB domain-containing protein family.

This chain is LOB domain-containing protein 21 (LBD21), found in Arabidopsis thaliana (Mouse-ear cress).